Here is a 273-residue protein sequence, read N- to C-terminus: Large ribosomal subunit protein uL2 (273 aa).

The tract at residues 221–263 (RGTAMNPVDHPHGGGEGRNFGKHPVTPWGVQTKGKKTRHNKRT) is disordered. Residues 253–263 (KGKKTRHNKRT) are compositionally biased toward basic residues.

Belongs to the universal ribosomal protein uL2 family. As to quaternary structure, part of the 50S ribosomal subunit. Forms a bridge to the 30S subunit in the 70S ribosome.

In terms of biological role, one of the primary rRNA binding proteins. Required for association of the 30S and 50S subunits to form the 70S ribosome, for tRNA binding and peptide bond formation. It has been suggested to have peptidyltransferase activity; this is somewhat controversial. Makes several contacts with the 16S rRNA in the 70S ribosome. This is Large ribosomal subunit protein uL2 from Histophilus somni (strain 129Pt) (Haemophilus somnus).